Consider the following 403-residue polypeptide: Cell cycle checkpoint control protein RAD9B (403 aa).

The interval 285–347 is disordered; it reads PLSQARRSHP…ASAGQDDIFE (63 aa). 2 positions are modified to phosphoserine: serine 354 and serine 363.

The protein belongs to the rad9 family. Interacts with HUS1, HUS1B, RAD1, RAD9A and RAD17.

The polypeptide is Cell cycle checkpoint control protein RAD9B (Rad9b) (Mus musculus (Mouse)).